We begin with the raw amino-acid sequence, 590 residues long: Protein NRT1/ PTR FAMILY 6.3 (590 aa).

The next 2 helical transmembrane spans lie at 46–66 (LTTL…MHLG) and 77–97 (FLGT…TFLG). A Phosphothreonine; by CIPK23 modification is found at Thr101. The next 10 helical transmembrane spans lie at 102 to 122 (IAIF…STII), 143 to 163 (GIQL…TGGV), 193 to 213 (FFFC…YVQD), 219 to 239 (WGYG…LAGT), 342 to 362 (MLPI…LTTL), 374 to 394 (IGSF…GLLL), 423 to 443 (IGLG…VELK), 460 to 480 (LGFY…ALIY), 501 to 521 (GLLL…VTIV), and 542 to 562 (YNFY…FLVF). Residues His356 and Thr360 each coordinate substrate.

It belongs to the major facilitator superfamily. Proton-dependent oligopeptide transporter (POT/PTR) (TC 2.A.17) family. In terms of assembly, monomer and homodimer. The dimer has the 2 monomers in the same orientation. Interacts with CIPK23. In terms of processing, acts as a high-affinity nitrate transporter when phosphorylated and as a low-affinity transporter when dephosphorylated. Forms homodimer when unphosphorylated and monomer when phosphorylated. Low nitrogen concentration in the medium stimulates phosphorylation. Phosphorylation also regulates the nitrate signaling. In terms of tissue distribution, expressed in the stele in lateral root primordia before emergence and in the tip of primary and emerged lateral roots. Detected in emerging and immature leaves, guard cells, flower buds, style, stigma, anthers and pollen grains. Not detected in the shoot apical meristem.

Its subcellular location is the membrane. In terms of biological role, dual affinity nitrate transporter. Involved in proton-dependent nitrate uptake and in the regulation of the nitrate transporter NRT2.1. Also acts as a nitrate sensor that trigger a specific signaling pathway stimulating lateral root growth and seed germination. The uptake activity is not required for sensor function. Displays an auxin transport facilitation inhibited by high nitrate concentration. Required to prevent auxin accumulation in preemerged lateral root primordia and young lateral roots when external nitrate concentration is low or null. May be involved in the basipetal transport of auxin out of the lateral root tips. Acts as a bidirectional transporter involved in root-to-shoot nitrate translocation. Recognizes specifically nitrate and chlorate, but not nitrite, alanine, sulfate, phosphate or the di-peptide Ala-Ala. The protein is Protein NRT1/ PTR FAMILY 6.3 (NPF6.3) of Arabidopsis thaliana (Mouse-ear cress).